The primary structure comprises 559 residues: Small ribosomal subunit protein bS1 (559 aa).

S1 motif domains are found at residues 21 to 87, 105 to 171, 192 to 260, 277 to 347, 364 to 434, and 451 to 520; these read GAII…LSRE, DEVV…VSRR, GQQV…LGLK, GTRV…LGIK, GDRI…LGIK, and GSIV…LSVK.

It belongs to the bacterial ribosomal protein bS1 family.

Binds mRNA; thus facilitating recognition of the initiation point. It is needed to translate mRNA with a short Shine-Dalgarno (SD) purine-rich sequence. This Pseudomonas aeruginosa (strain ATCC 15692 / DSM 22644 / CIP 104116 / JCM 14847 / LMG 12228 / 1C / PRS 101 / PAO1) protein is Small ribosomal subunit protein bS1 (rpsA).